A 413-amino-acid polypeptide reads, in one-letter code: Falstatin (413 aa).

A signal peptide spans 1–21 (MNLLVFFCFFLLSCIVHLSRC). The BC loop; binds and inhibits the active site cavity of cysteine proteases motif lies at 284–294 (LDSVNGNGFVW). Composition is skewed to polar residues over residues 325–339 (ISVTNPVPIPKNSNT) and 346–360 (NNKQDGSQNNTTTNH). A disordered region spans residues 325–367 (ISVTNPVPIPKNSNTNKDDSINNKQDGSQNNTTTNHFPKPREQ).

Belongs to the protease inhibitor I71 family. Oligomer; probably composed of 10 monomers. In terms of processing, proteolytically cleaved.

The protein resides in the secreted. It is found in the cytoplasmic vesicle. Its subcellular location is the secretory vesicle. It localises to the microneme. The protein localises to the parasitophorous vacuole lumen. The protein resides in the host cytoplasm. Its function is as follows. Cysteine protease inhibitor. Inhibits cysteine protease falcipains FP2 and FP3. Required for the invasion of host erythrocytes by merozoites. In the mosquito vector, essential for the gliding motility of hemocoel sporozoites and, therefore, for salivary gland invasion and the subsequent transmission from the mosquito to the mammalian host. Required for the invasion of host hepatocytes. During the liver stage, may prevent host hepatocyte cell death likely by inhibiting host cysteine proteases. The sequence is that of Falstatin from Plasmodium falciparum (isolate 3D7).